The primary structure comprises 270 residues: Acyl-[acyl-carrier-protein]--UDP-N-acetylglucosamine O-acyltransferase (270 aa).

The protein belongs to the transferase hexapeptide repeat family. LpxA subfamily. As to quaternary structure, homotrimer.

It is found in the cytoplasm. The enzyme catalyses a (3R)-hydroxyacyl-[ACP] + UDP-N-acetyl-alpha-D-glucosamine = a UDP-3-O-[(3R)-3-hydroxyacyl]-N-acetyl-alpha-D-glucosamine + holo-[ACP]. Its pathway is glycolipid biosynthesis; lipid IV(A) biosynthesis; lipid IV(A) from (3R)-3-hydroxytetradecanoyl-[acyl-carrier-protein] and UDP-N-acetyl-alpha-D-glucosamine: step 1/6. In terms of biological role, involved in the biosynthesis of lipid A, a phosphorylated glycolipid that anchors the lipopolysaccharide to the outer membrane of the cell. The protein is Acyl-[acyl-carrier-protein]--UDP-N-acetylglucosamine O-acyltransferase of Helicobacter pylori (strain G27).